The chain runs to 244 residues: tRNA (guanine-N(7)-)-methyltransferase (244 aa).

Residues Met1–Arg24 are disordered. 4 residues coordinate S-adenosyl-L-methionine: Glu74, Glu99, Asp126, and Asp149. Asp149 is a catalytic residue. Substrate-binding positions include Lys153, Asp185, and Thr222 to Glu225.

It belongs to the class I-like SAM-binding methyltransferase superfamily. TrmB family.

The enzyme catalyses guanosine(46) in tRNA + S-adenosyl-L-methionine = N(7)-methylguanosine(46) in tRNA + S-adenosyl-L-homocysteine. Its pathway is tRNA modification; N(7)-methylguanine-tRNA biosynthesis. Its function is as follows. Catalyzes the formation of N(7)-methylguanine at position 46 (m7G46) in tRNA. The polypeptide is tRNA (guanine-N(7)-)-methyltransferase (Pseudomonas savastanoi pv. phaseolicola (strain 1448A / Race 6) (Pseudomonas syringae pv. phaseolicola (strain 1448A / Race 6))).